We begin with the raw amino-acid sequence, 497 residues long: Glycerol kinase (497 aa).

Residue Thr-13 participates in ADP binding. ATP contacts are provided by Thr-13, Thr-14, and Ser-15. Thr-13 provides a ligand contact to sn-glycerol 3-phosphate. Residue Arg-17 participates in ADP binding. 3 residues coordinate sn-glycerol 3-phosphate: Arg-83, Glu-84, and Tyr-135. Positions 83, 84, and 135 each coordinate glycerol. His-231 carries the phosphohistidine; by HPr modification. Sn-glycerol 3-phosphate is bound at residue Asp-245. The glycerol site is built by Asp-245 and Gln-246. ADP contacts are provided by Thr-267 and Gly-310. Residues Thr-267, Gly-310, Gln-314, and Gly-411 each contribute to the ATP site. Residues Gly-411 and Asn-415 each contribute to the ADP site.

It belongs to the FGGY kinase family. As to quaternary structure, homotetramer and homodimer (in equilibrium). The phosphoenolpyruvate-dependent sugar phosphotransferase system (PTS), including enzyme I, and histidine-containing protein (HPr) are required for the phosphorylation, which leads to the activation of the enzyme.

The enzyme catalyses glycerol + ATP = sn-glycerol 3-phosphate + ADP + H(+). The protein operates within polyol metabolism; glycerol degradation via glycerol kinase pathway; sn-glycerol 3-phosphate from glycerol: step 1/1. Its activity is regulated as follows. Activated by phosphorylation and inhibited by fructose 1,6-bisphosphate (FBP). Functionally, key enzyme in the regulation of glycerol uptake and metabolism. Catalyzes the phosphorylation of glycerol to yield sn-glycerol 3-phosphate. This Listeria monocytogenes serovar 1/2a (strain ATCC BAA-679 / EGD-e) protein is Glycerol kinase.